Reading from the N-terminus, the 270-residue chain is UPF0354 protein BCA_4815 (270 aa).

It belongs to the UPF0354 family.

The protein is UPF0354 protein BCA_4815 of Bacillus cereus (strain 03BB102).